Here is a 216-residue protein sequence, read N- to C-terminus: Ribonuclease T (216 aa).

Positions 28–202 (VVVDVETGGF…YDTEQTARLF (175 aa)) constitute an Exonuclease domain. Mg(2+)-binding residues include Asp-31, Glu-33, His-189, and Asp-194. The active-site Proton donor/acceptor is the His-189.

This sequence belongs to the RNase T family. In terms of assembly, homodimer. It depends on Mg(2+) as a cofactor.

Trims short 3' overhangs of a variety of RNA species, leaving a one or two nucleotide 3' overhang. Responsible for the end-turnover of tRNA: specifically removes the terminal AMP residue from uncharged tRNA (tRNA-C-C-A). Also appears to be involved in tRNA biosynthesis. The protein is Ribonuclease T of Xanthomonas campestris pv. campestris (strain 8004).